Reading from the N-terminus, the 484-residue chain is MATERLNQVRTSVFQASQSLLQTLSTSLGPRGLDKMVVKDKKTVVTNDGATILKYLNHHPIHGILSSMSATQDEECGDGTTSVVILAGCLLESISSLLERNVHPSVICDNLEIAKKIGLRYIDRVKMECSEKDLISNVTTALCSKIASSTGEMAVEAIRGMEYVNGDKKNIRVVKKIGGNLDDVKAYKSILLECDLKDIPKKAKVGVIQFCLSAPKTNMDSKILINDPALMEKIIQDERKYILEMCKKIKKSGCTLLVVQKSILRESLSDLASHFLKQLNILVVNSVDRKDVDYICSAMNIQPVSEVDLLSPASLVDVETGEVEGMLEIKGYGCTILLRGCDDMVVEEAERSLNDALCVVKCLKELPFLVPGGGSIEMGIALMLSESTEGNIYVLREIAKAFEGVPYFLARNAGLYPVEIVSELRSELKQNCCAGISVRSGHAGDMVRDDSVVQPAKVSISVVTLALETVSMILKIDDILPARR.

It belongs to the TCP-1 chaperonin family. Component of the T-complex protein 1 (TCP1) complex.

Its subcellular location is the cytoplasm. Its function is as follows. Molecular chaperone; assists the folding of proteins upon ATP hydrolysis. The polypeptide is T-complex protein 1 subunit delta (CCT4) (Encephalitozoon cuniculi (strain GB-M1) (Microsporidian parasite)).